The chain runs to 144 residues: Transcription antitermination protein NusB (144 aa).

It belongs to the NusB family.

Functionally, involved in transcription antitermination. Required for transcription of ribosomal RNA (rRNA) genes. Binds specifically to the boxA antiterminator sequence of the ribosomal RNA (rrn) operons. This chain is Transcription antitermination protein NusB, found in Haemophilus influenzae (strain PittEE).